The primary structure comprises 53 residues: Alpha-1-antiproteinase 1 (53 aa).

The tract at residues 1–28 (EDLQGDAVPETSATKDDNEXPEMIPMSL) is disordered.

This sequence belongs to the serpin family. Post-translationally, N-glycosylated; contains biantennary glycans. As to expression, plasma.

The protein localises to the secreted. In Equus caballus (Horse), this protein is Alpha-1-antiproteinase 1.